Consider the following 850-residue polypeptide: MSNNPPYMTNGIQAAVVEWIRALDLEIISLLLSRAWPLALLTTTELRWRPTVLTDTDNVVRLDRRQRLVRWDRRPPNEIFLEGFVPIVTREDPDWEETDLYGFAKNNHPSIFVSTTKTQRNKKKYVWTPRNANRGIVYQYEIYAPGGVDVNDSFSDASPWPNQMEVAFPGGIQNIYIRSARELHNGRVQRIWINPNFLDPGDLEPIVSSSRTLQVIWRVNHPDGGNKDGRSERSTSSYDDLMYGGTGNVQEDTFGDESNNPKPIADGEFMIESIKDKNSFLDLSKNVNGGIIHSNVYSGGDNQIWVFSYDDNKKAYKIKSYQNSSLYLSWDSNASSKEIILRGYTNSGSNNQYWQIEQTGKNYRLRNLLNLNMIITAQDKSSAFGGKEVIVNTEISNSNTKSSQEWNIIPFDFRPIMDGDYNIFNLDLPNQVVDFSNQPDLLVHGHEFCDNENQTWHFTYNSTYHAYKIWSGRKSNLLLTWDSNATSKEMVVRAYTESRSKNQYWRIEQTGSKSYKLRNLENSNMILGLTNVSTSYGGLNLMVQDDSNGNSNLHSDWDIKPIIYQYVPDGDYNIFNDNFPNIAVDYTNQEGALVHGHNFCSNNNQKWSFVYDGKKKAYKIKSGVNSKLWLTWDSNASSKEMVLRAYTESGNWNQYWRLYQANDGSYIIRNLKEFKMLIALTNIDTPYGGKQLIVTDTKESGNHWYLKKLGEVPLPNRKFRIATKLNYKKVIDSSTAYNLIITHDLNFASSIWELVYDSNKKAYNIYSADINNLGWVYQNKNFFVKLDNIDGPDHGDLRYFWTIEYSMQTGCYLIRSLYDPAHAVGYTDKDSVITDTSTYSDNQLFHFILM.

3 Ricin B-type lectin domains span residues 267–409, 413–560, and 564–707; these read GEFM…WNII, FRPI…WDIK, and YQYV…WYLK.

The protein belongs to the pierisin ADP-ribosyltransferase family.

The catalysed reaction is a 2'-deoxyguanosine in DNA + NAD(+) = an N(2)-(ADP-L-ribosyl)-2'-deoxyguanosine in DNA + nicotinamide + H(+). Its function is as follows. ADP-ribosylates double-stranded DNA by targeting the N2 amino group of dG residues. Induces apoptosis in a range of human cell lines. May play a role in destroying cells during pupation and/or defense against parasites. This Pieris brassicae (White butterfly) protein is Pierisin.